Reading from the N-terminus, the 568-residue chain is Chaperonin homolog Hsp-60, mitochondrial (568 aa).

Belongs to the chaperonin (HSP60) family.

It localises to the mitochondrion matrix. In terms of biological role, implicated in mitochondrial protein import and macromolecular assembly. May facilitate the correct folding of imported proteins. May also prevent misfolding and promote the refolding and proper assembly of unfolded polypeptides generated under stress conditions in the mitochondrial matrix. The chain is Chaperonin homolog Hsp-60, mitochondrial (hsp-60) from Caenorhabditis elegans.